The chain runs to 445 residues: Phosphoglucosamine mutase (445 aa).

The active-site Phosphoserine intermediate is the Ser-101. Positions 101, 240, 242, and 244 each coordinate Mg(2+). Ser-101 carries the phosphoserine modification.

The protein belongs to the phosphohexose mutase family. It depends on Mg(2+) as a cofactor. In terms of processing, activated by phosphorylation.

It catalyses the reaction alpha-D-glucosamine 1-phosphate = D-glucosamine 6-phosphate. Its function is as follows. Catalyzes the conversion of glucosamine-6-phosphate to glucosamine-1-phosphate. This chain is Phosphoglucosamine mutase, found in Pseudomonas aeruginosa (strain LESB58).